A 294-amino-acid polypeptide reads, in one-letter code: Light-independent protochlorophyllide reductase iron-sulfur ATP-binding protein (294 aa).

Residues Gly10–Thr15 and Lys39 each bind ATP. Ser14 lines the Mg(2+) pocket. 2 residues coordinate [4Fe-4S] cluster: Cys95 and Cys129. Asn180–Arg181 serves as a coordination point for ATP.

The protein belongs to the NifH/BchL/ChlL family. As to quaternary structure, homodimer. Protochlorophyllide reductase is composed of three subunits; ChlL, ChlN and ChlB. [4Fe-4S] cluster is required as a cofactor.

It is found in the plastid. The protein resides in the chloroplast. It catalyses the reaction chlorophyllide a + oxidized 2[4Fe-4S]-[ferredoxin] + 2 ADP + 2 phosphate = protochlorophyllide a + reduced 2[4Fe-4S]-[ferredoxin] + 2 ATP + 2 H2O. It functions in the pathway porphyrin-containing compound metabolism; chlorophyll biosynthesis (light-independent). Component of the dark-operative protochlorophyllide reductase (DPOR) that uses Mg-ATP and reduced ferredoxin to reduce ring D of protochlorophyllide (Pchlide) to form chlorophyllide a (Chlide). This reaction is light-independent. The L component serves as a unique electron donor to the NB-component of the complex, and binds Mg-ATP. The protein is Light-independent protochlorophyllide reductase iron-sulfur ATP-binding protein of Pleurastrum terricola (Filamentous green alga).